The primary structure comprises 366 residues: MSVLAALAAIGVLAVLIAVHELGHFAAARLQGIHVTRFALGFGPPLLKYQGAETEYSIRAIPLGGYVAFPDDDPDSEIPADDPNLLKNRPILDRAIVISAGVIANLVFAYFLLIGQVSTIGFQNIQPGLVIPQVDSASAAQVAGMEPGDIVLSLQGNTLPGFPDATTQFIDIVRRSPSVPITVEVQRGEETKTLTITPTPDAEGKGKIGVALLPNVETKRASNPLEALTYSAEAFERIVKLTTQGFWQLISNFADNASQVAGPVKIVEYGANIARSDASNLFQFGALISINLAVINILPLPALDGGQLVFLLIEGLLGKPLPEKFQMGVMQTGLVLLLSLGVFLIVRDTLNLTFVQEFLPSFTGYE.

H20 is a Zn(2+) binding site. E21 is an active-site residue. Residue H24 participates in Zn(2+) binding. Helical transmembrane passes span 95 to 115 (AIVISAGVIANLVFAYFLLIG), 293 to 313 (AVINILPLPALDGGQLVFLLI), and 325 to 345 (FQMGVMQTGLVLLLSLGVFLI). Residues 106–188 (LVFAYFLLIG…VPITVEVQRG (83 aa)) form the PDZ domain.

This sequence belongs to the peptidase M50B family. Zn(2+) serves as cofactor.

It is found in the cell inner membrane. In Synechocystis sp. (strain ATCC 27184 / PCC 6803 / Kazusa), this protein is Putative zinc metalloprotease slr1821.